The sequence spans 86 residues: Small ribosomal subunit protein bS20 (86 aa).

The interval Met1–Lys25 is disordered. The span at Arg12 to Lys25 shows a compositional bias: basic and acidic residues.

This sequence belongs to the bacterial ribosomal protein bS20 family.

Its function is as follows. Binds directly to 16S ribosomal RNA. This is Small ribosomal subunit protein bS20 from Beutenbergia cavernae (strain ATCC BAA-8 / DSM 12333 / CCUG 43141 / JCM 11478 / NBRC 16432 / NCIMB 13614 / HKI 0122).